Reading from the N-terminus, the 331-residue chain is Malate dehydrogenase (331 aa).

14–20 is a binding site for NAD(+); it reads GAAGSIG. Substrate-binding residues include Arg-95 and Arg-101. Residues Asn-108, Gln-115, and 132 to 134 contribute to the NAD(+) site; that span reads VGN. Substrate is bound by residues Asn-134 and Arg-165. The active-site Proton acceptor is His-190.

Belongs to the LDH/MDH superfamily. MDH type 2 family.

The enzyme catalyses (S)-malate + NAD(+) = oxaloacetate + NADH + H(+). In terms of biological role, catalyzes the reversible oxidation of malate to oxaloacetate. The polypeptide is Malate dehydrogenase (Rhodococcus opacus (strain B4)).